Consider the following 484-residue polypeptide: Cobyric acid synthase (484 aa).

Positions 253 to 430 (SLRVAVVRFP…WHGAFEHDEF (178 aa)) constitute a GATase cobBQ-type domain. C334 serves as the catalytic Nucleophile. The active site involves H422.

The protein belongs to the CobB/CobQ family. CobQ subfamily.

It participates in cofactor biosynthesis; adenosylcobalamin biosynthesis. Its function is as follows. Catalyzes amidations at positions B, D, E, and G on adenosylcobyrinic A,C-diamide. NH(2) groups are provided by glutamine, and one molecule of ATP is hydrogenolyzed for each amidation. The chain is Cobyric acid synthase from Cutibacterium acnes (strain DSM 16379 / KPA171202) (Propionibacterium acnes).